Consider the following 459-residue polypeptide: Prenyltransferase penI (459 aa).

Residues 107–108 (VV) and glutamate 111 contribute to the L-tryptophan site. Residues arginine 126, arginine 276, lysine 278, tyrosine 280, and tyrosine 384 each coordinate substrate.

The protein belongs to the tryptophan dimethylallyltransferase family.

It carries out the reaction quinolinone B + dimethylallyl diphosphate = peniprequinolone + diphosphate. It participates in secondary metabolite biosynthesis. Its pathway is alkaloid biosynthesis. The protein operates within mycotoxin biosynthesis. In terms of biological role, prenyltransferase; part of the gene cluster that mediates the biosynthesis of penigequinolones, potent insecticidal alkaloids that contain a highly modified 10-carbon prenyl group. The first stage is catalyzed by the nonribosomal peptide synthetase penN that condenses anthranilic acid and O-methyl-L-tyrosine to produce 4'-methoxycyclopeptin. 4'-methoxycyclopeptin is then converted to 4'-methoxydehydrocyclopeptin by the ketoglutarate-dependent dioxygenase penM through dehydrogenation to form a double bond between C-alpha and C-beta of the O-methyltyrosine side chain. PenM also converts its first product methoxydehydrocyclopeptin to 4'-methoxycyclopenin. The following conversion of 4'methoxycyclopenin into 4'-methoxyviridicatin is catalyzed by the cyclopenase penL. 4'-methoxyviridicatin is the precursor of quinolone natural products, and is further converted to quinolinone B. The prenyltransferase penI then catalyzes the canonical Friedel-Crafts alkylation of quinolinone B with dimethylallyl cation to yield dimethylallyl quinolone, which is subjected to FAD-dependent dehydrogenation by the FAD-linked oxidoreductase penH to yield conjugated aryl diene. The delta(3') double bond then serves as the site of the second alkylation with DMAPP catalyzed by the prenyltransferase penG to yield a carbenium ion intermediate, which can be attacked by H(2)O to yield a styrenyl quinolone containing a C3'-hydroxyprenyl chain, or undergo cyclization to yield yaequinolones J1 and J2. The conversion of the styrenyl quinolone into the tetrahydrofuran-containing yaequinolone C is performed by the FAD-dependent monooxygenase penE and involves epoxidation of the terminal C7'-C8' olefin, followed by epoxide ring opening initiated by the C3' hydroxyl group. The predicted cysteine hydrolase penJ acts as an epoxide hydrolase that enhances the rate of the 5-exo-tet cyclization step, increasing the yield of yaequinolone C. PenF catalyzes the cationic rearrangement of the epoxide formed by penE (before ring opening to produce yaequinolone C) into yaequinolone D. Finally, the short-chain dehydrogenase/reductase (SDR)-like reductase penD, catalyzes both the dehydration of yaequinolone D and the reduction of the resulting oxonium to yield penigequinolone. The protein is Prenyltransferase penI of Penicillium thymicola.